Here is a 185-residue protein sequence, read N- to C-terminus: Photosystem I assembly protein Ycf4 (185 aa).

Transmembrane regions (helical) follow at residues 20–40 (GNFF…SVGA) and 57–77 (ILFF…LFIS).

Belongs to the Ycf4 family.

It localises to the plastid. The protein localises to the chloroplast thylakoid membrane. Its function is as follows. Seems to be required for the assembly of the photosystem I complex. The polypeptide is Photosystem I assembly protein Ycf4 (Agrostis stolonifera (Creeping bentgrass)).